We begin with the raw amino-acid sequence, 205 residues long: Octanoyltransferase (205 aa).

A BPL/LPL catalytic domain is found at 30 to 205 (NSADELVWLL…ILKKEFYKIF (176 aa)). Substrate-binding positions include 68–75 (RGGKHTYH), 140–142 (AFG), and 153–155 (GIA). C171 serves as the catalytic Acyl-thioester intermediate.

This sequence belongs to the LipB family.

The protein resides in the cytoplasm. The enzyme catalyses octanoyl-[ACP] + L-lysyl-[protein] = N(6)-octanoyl-L-lysyl-[protein] + holo-[ACP] + H(+). It participates in protein modification; protein lipoylation via endogenous pathway; protein N(6)-(lipoyl)lysine from octanoyl-[acyl-carrier-protein]: step 1/2. Catalyzes the transfer of endogenously produced octanoic acid from octanoyl-acyl-carrier-protein onto the lipoyl domains of lipoate-dependent enzymes. Lipoyl-ACP can also act as a substrate although octanoyl-ACP is likely to be the physiological substrate. This Wolbachia pipientis wMel protein is Octanoyltransferase.